Reading from the N-terminus, the 379-residue chain is EP300-interacting inhibitor of differentiation 3 (379 aa).

A coiled-coil region spans residues 32-58; sequence LKQVEEEEEVEALKVEVAAASDTESDT.

It belongs to the NSE4 family. Component of the SMC5-SMC6 complex which consists at least of SMC5, SMC6, NSMCE2, NSMCE1, NSMCE4A or EID3 and NSMCE3. NSMCE1, NSMCE4A or EID3 and NSMCE3 probably form a subcomplex that bridges the head domains of the SMC5:SMC6 heterodimer. Homodimer, and heterodimer with EID2. Interacts with the C-terminal region of CREBBP.

It is found in the nucleus. The protein resides in the cytoplasm. It localises to the chromosome. The protein localises to the telomere. Functionally, tissue-specific component of the SMC5-SMC6 complex, a complex involved in repair of DNA double-strand breaks by homologous recombination. The complex may promote sister chromatid homologous recombination by recruiting the SMC1-SMC3 cohesin complex to double-strand breaks. The complex is required for telomere maintenance via recombination and mediates sumoylation of shelterin complex (telosome) components. Acts as a repressor of nuclear receptor-dependent transcription possibly by interfering with CREBBP-dependent coactivation. May function as a coinhibitor of other CREBBP/EP300-dependent transcription factors. This Bos taurus (Bovine) protein is EP300-interacting inhibitor of differentiation 3.